The chain runs to 213 residues: Thymidylate kinase (213 aa).

Residue 10 to 17 (GLEGAGKT) coordinates ATP.

This sequence belongs to the thymidylate kinase family.

The catalysed reaction is dTMP + ATP = dTDP + ADP. Functionally, phosphorylation of dTMP to form dTDP in both de novo and salvage pathways of dTTP synthesis. The protein is Thymidylate kinase of Escherichia coli O7:K1 (strain IAI39 / ExPEC).